A 620-amino-acid polypeptide reads, in one-letter code: Chaperone protein HscA homolog (620 aa).

It belongs to the heat shock protein 70 family.

Chaperone involved in the maturation of iron-sulfur cluster-containing proteins. Has a low intrinsic ATPase activity which is markedly stimulated by HscB. This is Chaperone protein HscA homolog from Pseudomonas fluorescens (strain ATCC BAA-477 / NRRL B-23932 / Pf-5).